A 60-amino-acid polypeptide reads, in one-letter code: Large ribosomal subunit protein bL32 (60 aa).

It belongs to the bacterial ribosomal protein bL32 family.

This is Large ribosomal subunit protein bL32 from Hydrogenobaculum sp. (strain Y04AAS1).